Consider the following 1323-residue polypeptide: Clustered mitochondria protein homolog (1323 aa).

Residues 103 to 141 (KEKPYNLAAIYDHLNKFREVIGLHFLDKYSSEVGVLSGV) form a TPR 1 repeat. The segment at 149-186 (LQDVKETEPETQDDKDKETDETKSTKEDSNQTEEKKSE) is disordered. Positions 150-186 (QDVKETEPETQDDKDKETDETKSTKEDSNQTEEKKSE) are enriched in basic and acidic residues. A Clu domain is found at 351–608 (FANQPDASRS…RATPLDIEFI (258 aa)). Residues 530–563 (CYGLSTDGSKIFSDSSFENVLKPIAEAFHLKPHP) form a TPR 2 repeat. The span at 764–801 (NEEEISKRKEESEKKATEGKDQDKEEEKANDNEKNKED) shows a compositional bias: basic and acidic residues. The disordered stretch occupies residues 764-808 (NEEEISKRKEESEKKATEGKDQDKEEEKANDNEKNKEDDKEEVSN). TPR repeat units follow at residues 1042–1076 (LSVYEQIYGRVHPETSKFYGLLSQYYAELGLKSEA), 1099–1132 (ITAYINSAFFESTNDDYINALNLYNKAINDWTLV), 1141–1174 (VNTYANLAELLSEHKLFQQANKLFEKAISISTKL), and 1183–1216 (GMLRYRYGGTLLGGGDFKSALDQFKSANDIFTKF). Positions 1250–1323 (KALAQQASAS…KKSNNKKSKK (74 aa)) are disordered. The span at 1308 to 1323 (PKKQLKKKSNNKKSKK) shows a compositional bias: basic residues.

Belongs to the CLU family. May associate with the eukaryotic translation initiation factor 3 (eIF-3) complex.

It localises to the cytoplasm. Its function is as follows. mRNA-binding protein involved in proper cytoplasmic distribution of mitochondria. This Debaryomyces hansenii (strain ATCC 36239 / CBS 767 / BCRC 21394 / JCM 1990 / NBRC 0083 / IGC 2968) (Yeast) protein is Clustered mitochondria protein homolog.